We begin with the raw amino-acid sequence, 101 residues long: Urease subunit gamma (101 aa).

This sequence belongs to the urease gamma subunit family. As to quaternary structure, heterotrimer of UreA (gamma), UreB (beta) and UreC (alpha) subunits. Three heterotrimers associate to form the active enzyme.

The protein resides in the cytoplasm. It carries out the reaction urea + 2 H2O + H(+) = hydrogencarbonate + 2 NH4(+). Its pathway is nitrogen metabolism; urea degradation; CO(2) and NH(3) from urea (urease route): step 1/1. In Ureaplasma parvum serovar 3 (strain ATCC 27815 / 27 / NCTC 11736), this protein is Urease subunit gamma.